A 259-amino-acid polypeptide reads, in one-letter code: 3-deoxy-manno-octulosonate cytidylyltransferase (259 aa).

The protein belongs to the KdsB family.

It localises to the cytoplasm. The catalysed reaction is 3-deoxy-alpha-D-manno-oct-2-ulosonate + CTP = CMP-3-deoxy-beta-D-manno-octulosonate + diphosphate. It participates in nucleotide-sugar biosynthesis; CMP-3-deoxy-D-manno-octulosonate biosynthesis; CMP-3-deoxy-D-manno-octulosonate from 3-deoxy-D-manno-octulosonate and CTP: step 1/1. Its pathway is bacterial outer membrane biogenesis; lipopolysaccharide biosynthesis. Activates KDO (a required 8-carbon sugar) for incorporation into bacterial lipopolysaccharide in Gram-negative bacteria. This is 3-deoxy-manno-octulosonate cytidylyltransferase from Xanthomonas axonopodis pv. citri (strain 306).